We begin with the raw amino-acid sequence, 235 residues long: Cytidylate kinase (235 aa).

G16–T24 is an ATP binding site.

The protein belongs to the cytidylate kinase family. Type 1 subfamily.

Its subcellular location is the cytoplasm. The catalysed reaction is CMP + ATP = CDP + ADP. It catalyses the reaction dCMP + ATP = dCDP + ADP. The sequence is that of Cytidylate kinase from Chlorobaculum tepidum (strain ATCC 49652 / DSM 12025 / NBRC 103806 / TLS) (Chlorobium tepidum).